Here is a 415-residue protein sequence, read N- to C-terminus: Elongation factor 1-gamma 1 (415 aa).

The residue at position 2 (S2) is an N-acetylserine. Positions 2–78 (SQGTLYANFR…YLVKLSQDDK (77 aa)) constitute a GST N-terminal domain. At T32 the chain carries Phosphothreonine. Positions 89–215 (DLNAQAQIIR…KDFKFADKPL (127 aa)) constitute a GST C-terminal domain. The disordered stretch occupies residues 212–256 (DKPLSPPQKKKEKKAPAAAPAASKKKEEAKPAATETETSSKKPKH). An EF-1-gamma C-terminal domain is found at 254–415 (PKHPLELLGK…KEIVDGKVLK (162 aa)).

In terms of assembly, the eukaryotic elongation factor 1 complex (eEF1) is probably a heterohexamer. Two trimeric complexes, each composed of eEF1A (TEF1 or TEF2), eEF1Balpha (EFB1) and eEF1Bgamma (CAM1 or TEF4), are probably dimerized via the eF1Bgamma subunits. The eEF1B subcomplex with the GEF activity is formed of eEF1Balpha and eEF1Bgamma. CAM1 interacts with EFB1. Component of a complex bound to MXR1 promoter region.

The protein localises to the cytoplasm. It localises to the nucleus. The protein operates within protein biosynthesis; polypeptide chain elongation. Subunit of the eukaryotic elongation factor 1 complex (eEF1). Probably plays a role in anchoring the complex to other cellular components. May be involved in transcriptional regulation of MXR1. The chain is Elongation factor 1-gamma 1 (CAM1) from Saccharomyces cerevisiae (strain ATCC 204508 / S288c) (Baker's yeast).